The sequence spans 56 residues: Stable protein 1 (56 aa).

Residues Gly-1 to Gly-44 enclose the Stress-response A/B barrel domain.

This Populus euphratica (Euphrates poplar) protein is Stable protein 1.